Consider the following 496-residue polypeptide: MNQSHSFPTDDPLDGDTLHEECGVFGILGHPDAAALTALGLHALQHRGQEAAGIVSFDGKRFYQERHMGLVGDHYTNPMTLARLPGSISIGHTRYSTTGEVAMRNVQPLFAELEEGGIAIAHNGNFTNGLTLRRQIIATGAICQSTSDTEVVLHLIARSRHASTSDRFIDAIRQMEGGYSMLAMTRTKLIAARDPTGIRPLVMGELDGKPIFCSETCALDIIGAKFIRDVENGEVIICEIQPDGSISIDARKPSKPQPERLCLFEYVYFARPDSVVGGRNVYTTRKNMGMNLAKESPVDADVVVPVPDGGTPAALGYAQESGIPFEYGIIRNHYVGRTFIEPTQQIRAFGVKLKHSANRAMIEGKRVVLVDDSIVRGTTSLKIVQMIREAGAREVHIRVASPMIFFPDFYGIDTPDADKLLANQYADVEAMAKYIGADSLAFLSINGLYRAVGGEDRNPARPQFTDHYFTGDYPTRLLDKNGESMGNKLSMLASNG.

Residues 1–21 (MNQSHSFPTDDPLDGDTLHEE) constitute a propeptide that is removed on maturation. The Nucleophile role is filled by Cys-22. Residues 22–241 (CGVFGILGHP…NGEVIICEIQ (220 aa)) form the Glutamine amidotransferase type-2 domain.

It in the C-terminal section; belongs to the purine/pyrimidine phosphoribosyltransferase family.

The catalysed reaction is 5-phospho-beta-D-ribosylamine + L-glutamate + diphosphate = 5-phospho-alpha-D-ribose 1-diphosphate + L-glutamine + H2O. It participates in purine metabolism; IMP biosynthesis via de novo pathway; N(1)-(5-phospho-D-ribosyl)glycinamide from 5-phospho-alpha-D-ribose 1-diphosphate: step 1/2. Functionally, catalyzes the formation of phosphoribosylamine from phosphoribosylpyrophosphate (PRPP) and glutamine. The sequence is that of Amidophosphoribosyltransferase from Rhizobium etli (strain ATCC 51251 / DSM 11541 / JCM 21823 / NBRC 15573 / CFN 42).